Reading from the N-terminus, the 207-residue chain is Large ribosomal subunit protein uL4 (207 aa).

The tract at residues 44-85 (MRQGTHKTKNRAEVSGGGRKPWRQKGTGRARQGSIRSPQWRG) is disordered.

This sequence belongs to the universal ribosomal protein uL4 family. As to quaternary structure, part of the 50S ribosomal subunit.

One of the primary rRNA binding proteins, this protein initially binds near the 5'-end of the 23S rRNA. It is important during the early stages of 50S assembly. It makes multiple contacts with different domains of the 23S rRNA in the assembled 50S subunit and ribosome. Its function is as follows. Forms part of the polypeptide exit tunnel. The sequence is that of Large ribosomal subunit protein uL4 from Geobacillus thermodenitrificans (strain NG80-2).